Reading from the N-terminus, the 147-residue chain is Ribonuclease H (147 aa).

The RNase H type-1 domain occupies Met1–Arg142. Asp10, Glu48, Asp70, and Asp134 together coordinate Mg(2+).

The protein belongs to the RNase H family. Monomer. Requires Mg(2+) as cofactor.

The protein localises to the cytoplasm. The catalysed reaction is Endonucleolytic cleavage to 5'-phosphomonoester.. In terms of biological role, endonuclease that specifically degrades the RNA of RNA-DNA hybrids. This chain is Ribonuclease H, found in Marinobacter nauticus (strain ATCC 700491 / DSM 11845 / VT8) (Marinobacter aquaeolei).